A 348-amino-acid chain; its full sequence is GMP reductase 2 (348 aa).

NADP(+) contacts are provided by residues S26 to R27, K78, D129 to A131, and I180 to G181. Positions 181, 183, and 186 each coordinate K(+). The active-site Thioimidate intermediate is the C186. The Proton donor/acceptor role is filled by T188. A K(+)-binding site is contributed by R189. GMP-binding positions include D219–G221, G242–G243, G268–S270, and R286–G290. NADP(+) is bound by residues M269 and Y285 to R286. K291 is modified (N6-acetyllysine). Residue S314–T317 coordinates NADP(+).

The protein belongs to the IMPDH/GMPR family. GuaC type 1 subfamily. As to quaternary structure, homotetramer.

It carries out the reaction IMP + NH4(+) + NADP(+) = GMP + NADPH + 2 H(+). Its function is as follows. Catalyzes the irreversible NADPH-dependent deamination of GMP to IMP. It functions in the conversion of nucleobase, nucleoside and nucleotide derivatives of G to A nucleotides, and in maintaining the intracellular balance of A and G nucleotides. Plays a role in modulating cellular differentiation. The protein is GMP reductase 2 of Mus musculus (Mouse).